Reading from the N-terminus, the 372-residue chain is UDP-N-acetylglucosamine--N-acetylmuramyl-(pentapeptide) pyrophosphoryl-undecaprenol N-acetylglucosamine transferase (372 aa).

UDP-N-acetyl-alpha-D-glucosamine contacts are provided by residues 11–13 (TAG), Asn-123, Arg-160, Ser-200, and Gln-298.

It belongs to the glycosyltransferase 28 family. MurG subfamily.

The protein resides in the cell membrane. The catalysed reaction is di-trans,octa-cis-undecaprenyl diphospho-N-acetyl-alpha-D-muramoyl-L-alanyl-D-glutamyl-meso-2,6-diaminopimeloyl-D-alanyl-D-alanine + UDP-N-acetyl-alpha-D-glucosamine = di-trans,octa-cis-undecaprenyl diphospho-[N-acetyl-alpha-D-glucosaminyl-(1-&gt;4)]-N-acetyl-alpha-D-muramoyl-L-alanyl-D-glutamyl-meso-2,6-diaminopimeloyl-D-alanyl-D-alanine + UDP + H(+). It functions in the pathway cell wall biogenesis; peptidoglycan biosynthesis. Functionally, cell wall formation. Catalyzes the transfer of a GlcNAc subunit on undecaprenyl-pyrophosphoryl-MurNAc-pentapeptide (lipid intermediate I) to form undecaprenyl-pyrophosphoryl-MurNAc-(pentapeptide)GlcNAc (lipid intermediate II). The chain is UDP-N-acetylglucosamine--N-acetylmuramyl-(pentapeptide) pyrophosphoryl-undecaprenol N-acetylglucosamine transferase from Cutibacterium acnes (strain DSM 16379 / KPA171202) (Propionibacterium acnes).